We begin with the raw amino-acid sequence, 447 residues long: MTKVITRFAPSPTGMLHVGNIRVALLNWLYAKKHNGKFILRFDDTDLERSKQKYKNDIERDLKFLNINWDQTFNQLSRVSRYHEIKNLLINKKRLYACYETKEELELKRKLQLSKGLPPIYDRASLNLTEKQIQKYIEQGRKPHYRFFLSYEPISWFDMIKGEIKYDGKTLSDPIVIRADGSMTYMLCSVIDDIDYDITHIIRGEDHVSNTAIQIQMFEALNKIPPVFAHLSLIINKEEKISKRVGGFEIAYLKKEVGLEAMTIASFFSLLGSSLHIFPYKSIEKLVAQFEISSFSKSPTIYQQYDLERLNHKLLISLDFNEVKERLKEIDADYIDENFWLSVRPNLQKLSDIKDWWDICYQTPKIKNLNLDKEYLKQASKLLPLKITKDSWSIWTKEITNITGRKGKELFLPLRLALTGRESGPEIAGILPLIDREEIIRRLISIA.

Positions 10 to 20 (PSPTGMLHVGN) match the 'HIGH' region motif. Positions 240–244 (KISKR) match the 'KMSKS' region motif. Position 243 (Lys-243) interacts with ATP.

The protein belongs to the class-I aminoacyl-tRNA synthetase family. Glutamate--tRNA ligase type 1 subfamily. In terms of assembly, monomer.

The protein resides in the cytoplasm. It catalyses the reaction tRNA(Glu) + L-glutamate + ATP = L-glutamyl-tRNA(Glu) + AMP + diphosphate. Catalyzes the attachment of glutamate to tRNA(Glu) in a two-step reaction: glutamate is first activated by ATP to form Glu-AMP and then transferred to the acceptor end of tRNA(Glu). In Rickettsia prowazekii (strain Madrid E), this protein is Glutamate--tRNA ligase 1.